Reading from the N-terminus, the 1363-residue chain is MQPGAALNLRLWLCLGLLQGLANGYSMTPPTLNITEDSYVIDTGDSLSISCRGQHPLEWTWPGAQEVLTTGGKDSEDTRVVHDCEGTEARPYCKVLLLAQTHANNTGSYHCYYKYIKARIEGTTAASTYVFVRDFKHPFINKPDTLLVNRKDSMWVPCLVSIPGLNITLRSQSSALHPDGQEVLWDDRRGMRVPTQLLRDALYLQCETTWGDQNFLSNLFVVHITGNELYDIQLYPKKSMELLVGEKLVLNCTVWAEFDSGVTFDWDYPGKQAERAKWVPERRSQQTHTELSSILTIHNVSQNDLGPYVCEANNGIQRFRESTEVIVHEKPFISVEWLKGPVLEATAGDELVKLPVKLAAYPPPEFQWYKDRKAVTGRHNPHALVLKEVTEASAGVYTLALWNSAAGLRQNISLELVVNVPPHIHEKEASSPSIYSRHSRQTLTCTAYGVPQPLSVQWHWRPWTPCKTFAQRSLRRRQQRDGMPQCRDWKEVTTQDAVNPIESLDSWTEFVEGKNKTVSKLVIQDANVSAMYKCVVVNKVGQDERLIYFYVTTIPDGFSIESEPSEDPLEGQSVRLSCRADNYTYEHLRWYRLNLSTLHDAQGNPLLLDCKNVHLFATPLEANLEEAEPGARHATLSLNIPRVAPEDEGDYVCEVQDRRSQDKHCHKKYLSVQALEAPRLTQNLTDLLVNVSDSLEMRCPVAGAHVPSIVWYKDERLLEKESGIDLADSNQRLSIQRVREEDAGRYLCSVCNAKGCVNSSASVAVEGSEDKGSMEIVILIGTGVIAVFFWVLLLLIFCNMKRPAHADIKTGYLSIIMDPGEVPLEEQCEYLSYDASQWEFPRERLHLGRVLGHGAFGKVVEASAFGINKGSSCDTVAVKMLKEGATASEHRALMSELKILIHIGNHLNVVNLLGACTKPNGPLMVIVEFCKYGNLSNFLRVKRDTFNPYAEKSPEQRRRFRAMVEGAKADRRRPGSSDRALFTRFLMGKGSARRAPLVQEAEDLWLSPLTMEDLVCYSFQVARGMEFLASRKCIHRDLAARNILLSESDIVKICDFGLARDIYKDPDYVRKGSARLPLKWMAPESIFDKVYTTQSDVWSFGVLLWEIFSLGASPYPGVQINEEFCQRLKDGTRMRAPELATPAIRHIMQSCWSGDPKARPAFSDLVEILGDLLQGGGWQEEEEERMALHSSQSSEEDGFMQASTTALHITEADADDSPPSMHCHSLAARYYNCVSFPGRLARGTKTPGSSRMKTFEELPMTPTTYKASMDNQTDSGMVLASEEFEELESRHRPEGSFSCKGPGQHMDIPRGHPDPQGRRRRPTQGAQGGKVFYNNEYGEVSQPCTEGDCCPSAGSTFFADSSY.

The first 24 residues, 1–24 (MQPGAALNLRLWLCLGLLQGLANG), serve as a signal peptide directing secretion. Residues 25–775 (YSMTPPTLNI…EGSEDKGSME (751 aa)) lie on the Extracellular side of the membrane. Asn33, Asn104, Asn166, Asn251, Asn299, and Asn411 each carry an N-linked (GlcNAc...) asparagine glycan. Ig-like C2-type domains follow at residues 44–118 (GDSL…YIKA), 151–213 (KDSM…WGDQ), 230–326 (YDIQ…TEVI), 331–415 (PFIS…ISLE), 422–552 (PHIH…FYVT), 555–671 (PDGF…KYLS), and 678–764 (PRLT…ASVA). 2 disulfide bridges follow: Cys51–Cys111 and Cys158–Cys206. Cys252 and Cys310 are joined by a disulfide. Intrachain disulfides connect Cys445–Cys534, Cys466–Cys486, and Cys578–Cys653. 6 N-linked (GlcNAc...) asparagine glycosylation sites follow: Asn515, Asn527, Asn582, Asn594, Asn683, and Asn690. A disulfide bridge connects residues Cys699 and Cys751. N-linked (GlcNAc...) asparagine glycosylation is present at Asn758. The chain crosses the membrane as a helical span at residues 776–796 (IVILIGTGVIAVFFWVLLLLI). Residues 797 to 1363 (FCNMKRPAHA…GSTFFADSSY (567 aa)) are Cytoplasmic-facing. 2 positions are modified to phosphotyrosine; by SRC: Tyr830 and Tyr833. The Protein kinase domain maps to 845–1173 (LHLGRVLGHG…DLVEILGDLL (329 aa)). ATP is bound by residues 851 to 859 (LGHGAFGKV) and Lys879. Catalysis depends on Asp1037, which acts as the Proton acceptor. Tyr1063 is modified (phosphotyrosine; by autocatalysis and SRC). 4 positions are modified to phosphotyrosine; by autocatalysis: Tyr1068, Tyr1230, Tyr1231, and Tyr1265. The tract at residues 1288–1330 (ESRHRPEGSFSCKGPGQHMDIPRGHPDPQGRRRRPTQGAQGGK) is disordered. The span at 1307–1317 (DIPRGHPDPQG) shows a compositional bias: basic and acidic residues. A phosphotyrosine; by autocatalysis and SRC mark is found at Tyr1333 and Tyr1337. Tyr1363 bears the Phosphotyrosine; by autocatalysis mark.

Belongs to the protein kinase superfamily. Tyr protein kinase family. CSF-1/PDGF receptor subfamily. As to quaternary structure, interacts with VEGFC and VEGFD. Monomer in the absence of bound VEGFC or VEGFD. Homodimer in the presence of bound VEGFC or VEGFD. Can also form a heterodimer with KDR. Interacts with PTPN14; the interaction is enhanced by stimulation with VEGFC. Interacts with CRK, GRB2, PTK2/FAK1, SHC1, PIK3R1 and PTPN11/SHP-2. Identified in a complex with SRC and ITGB1. Autophosphorylated on tyrosine residues upon ligand binding. Autophosphorylation occurs in trans, i.e. one subunit of the dimeric receptor phosphorylates tyrosine residues on the other subunit. Phosphorylation in response to H(2)O(2) is mediated by a process that requires SRC and PRKCD activity. Phosphorylation at Tyr-1068 is required for autophosphorylation at additional tyrosine residues. Phosphorylation at Tyr-1063 and Tyr-1337 is important for interaction with CRK and subsequent activation of MAPK8. Phosphorylation at Tyr-1230, Tyr-1231 and Tyr-1337 is important for interaction with GRB2 and subsequent activation of the AKT1 and MAPK1/ERK2 and/or MAPK3/ERK1 signaling pathways. In response to endothelial cell adhesion onto collagen, can also be phosphorylated in the absence of FLT4 kinase activity by SRC. In terms of tissue distribution, expressed in adult lung and liver, and in fetal liver, brain, intestine and placenta.

It localises to the cell membrane. The protein localises to the cytoplasm. It is found in the nucleus. It carries out the reaction L-tyrosyl-[protein] + ATP = O-phospho-L-tyrosyl-[protein] + ADP + H(+). Its activity is regulated as follows. Present in an inactive conformation in the absence of bound ligand. Binding of VEGFC or VEGFD leads to dimerization and activation by autophosphorylation on tyrosine residues. Functionally, tyrosine-protein kinase that acts as a cell-surface receptor for VEGFC and VEGFD, and plays an essential role in adult lymphangiogenesis and in the development of the vascular network and the cardiovascular system during embryonic development. Promotes proliferation, survival and migration of endothelial cells, and regulates angiogenic sprouting. Signaling by activated FLT4 leads to enhanced production of VEGFC, and to a lesser degree VEGFA, thereby creating a positive feedback loop that enhances FLT4 signaling. Modulates KDR signaling by forming heterodimers. Mediates activation of the MAPK1/ERK2, MAPK3/ERK1 signaling pathway, of MAPK8 and the JUN signaling pathway, and of the AKT1 signaling pathway. Phosphorylates SHC1. Mediates phosphorylation of PIK3R1, the regulatory subunit of phosphatidylinositol 3-kinase. Promotes phosphorylation of MAPK8 at 'Thr-183' and 'Tyr-185', and of AKT1 at 'Ser-473'. The sequence is that of Vascular endothelial growth factor receptor 3 (Flt4) from Mus musculus (Mouse).